Consider the following 249-residue polypeptide: Indole-3-glycerol phosphate synthase (249 aa).

The protein belongs to the TrpC family.

It catalyses the reaction 1-(2-carboxyphenylamino)-1-deoxy-D-ribulose 5-phosphate + H(+) = (1S,2R)-1-C-(indol-3-yl)glycerol 3-phosphate + CO2 + H2O. Its pathway is amino-acid biosynthesis; L-tryptophan biosynthesis; L-tryptophan from chorismate: step 4/5. The chain is Indole-3-glycerol phosphate synthase from Pyrobaculum arsenaticum (strain DSM 13514 / JCM 11321 / PZ6).